A 323-amino-acid polypeptide reads, in one-letter code: CD-NTase-associated protein 12 (323 aa).

Positions 4–120 constitute a TIR domain; sequence RIFIGSSSEQ…LDGITVAKFT (117 aa). The active site involves Glu-84. Residues 154–323 are STING domain; the sequence is STALAIGYYN…YVNVLTNVKL (170 aa). Residues Ser-164, Phe-165, Arg-234, Pro-237, Asp-259, Ser-262, and Thr-263 each contribute to the 3',3'-c-di-GMP site.

This sequence in the C-terminal section; belongs to the bacterial STING family. In terms of assembly, forms homodimers which subsequently form filaments. In vitro in the presence of c-di-GMP forms filaments up to 300 nm in length with an ordered array of parallel-stacked subunits, where the TIR domains form one face of the filament and the STING domains form the other face. Antiparallel double-filament structures are also seen. 3'3'-cGAMP weakly induces filament formation, while 2'3'-cGAMP does not.

The enzyme catalyses NAD(+) + H2O = ADP-D-ribose + nicotinamide + H(+). NAD(+) hydrolase activity is strongly stimulated by c-di-GMP, weakly by 3'3'-cGAMP, very weakly by c-di-AMP and not at all by 2'3'-cGAMP. Self-association of TIR domains is required for NADase activity. Its function is as follows. Effector protein of a CBASS antiviral system with NAD(+) hydrolase activity. CBASS (cyclic oligonucleotide-based antiphage signaling system) provides immunity against bacteriophage. The CD-NTase protein synthesizes cyclic nucleotides in response to infection; these serve as specific second messenger signals. The signals activate a diverse range of effectors, leading to bacterial cell death and thus abortive phage infection. A type I-D(GG) CBASS system. In terms of biological role, upon activation by 3'3'-c-di-GMP forms filaments which hydrolyze NAD(+); filament formation is required for enzyme activation. Induction in an E.coli strain that synthesizes c-di-GMP leads to significant growth inhibition. Binds c-di-GMP and 3'3'-cGAMP (3'3'-cyclic GMP-AMP), but not c-di-AMP, 2'3'-cGAMP or cUMP-AMP. This is CD-NTase-associated protein 12 from Sphingobacterium faecium (strain DSM 11690 / JCM 21820 / NBRC 15299 / NCIMB 13408 / KS 0470).